We begin with the raw amino-acid sequence, 179 residues long: Pyridoxal 5'-phosphate synthase subunit PdxT (179 aa).

48 to 50 serves as a coordination point for L-glutamine; sequence GES. The active-site Nucleophile is the cysteine 79. Residues arginine 101 and 127–128 each bind L-glutamine; that span reads IR. Residues histidine 163 and glutamate 165 each act as charge relay system in the active site.

Belongs to the glutaminase PdxT/SNO family. In terms of assembly, in the presence of PdxS, forms a dodecamer of heterodimers. Only shows activity in the heterodimer.

It catalyses the reaction aldehydo-D-ribose 5-phosphate + D-glyceraldehyde 3-phosphate + L-glutamine = pyridoxal 5'-phosphate + L-glutamate + phosphate + 3 H2O + H(+). It carries out the reaction L-glutamine + H2O = L-glutamate + NH4(+). The protein operates within cofactor biosynthesis; pyridoxal 5'-phosphate biosynthesis. Its function is as follows. Catalyzes the hydrolysis of glutamine to glutamate and ammonia as part of the biosynthesis of pyridoxal 5'-phosphate. The resulting ammonia molecule is channeled to the active site of PdxS. The sequence is that of Pyridoxal 5'-phosphate synthase subunit PdxT from Francisella philomiragia subsp. philomiragia (strain ATCC 25017 / CCUG 19701 / FSC 153 / O#319-036).